Here is a 213-residue protein sequence, read N- to C-terminus: Ras-related protein Rab-39B (213 aa).

GTP contacts are provided by serine 17, glycine 20, lysine 21, serine 22, cysteine 23, serine 37, and threonine 40. Serine 22 contributes to the Mg(2+) binding site. The tract at residues 35 to 43 (QVSDPTVGV) is switch-I. Threonine 40 and aspartate 64 together coordinate Mg(2+). The GTP site is built by glycine 67, histidine 123, lysine 124, aspartate 126, alanine 154, and arginine 155. A switch-II region spans residues 67–83 (GQERFRSITRAYYRNSV). Residue serine 201 is modified to Phosphoserine. 2 S-geranylgeranyl cysteine lipidation sites follow: cysteine 211 and cysteine 213. Cysteine 213 is subject to Cysteine methyl ester.

Belongs to the small GTPase superfamily. Rab family. In terms of assembly, interacts (GDP-bound) with C9orf72; C9orf72 in complex with SMCR8 acts as a GEF for RAB39B. Interacts (in GTP-bound form) with PICK1 (via PDZ domain); a PICK1 homodimer may allow simultaneous association of RAB39B and GRIA2 to PICK1 which is involved in GRIA2 trafficking. Interacts with isoform c of RASSF1; the interaction is strong. Interacts with isoform a of RASSF1; the interaction is weak. Interacts with the DLG4/PSD-95. Interacts (GTP-bound) with HOPS complex components VPS39 and VPS41. It depends on Mg(2+) as a cofactor. In terms of tissue distribution, specifically expressed in neuron and neuronal precursors in the brain. Expression is high in all regions of the brain with highest levels observed in the hippocampus.

Its subcellular location is the cell membrane. The protein resides in the cytoplasmic vesicle membrane. The protein localises to the golgi apparatus. It is found in the cytoplasmic vesicle. It localises to the autophagosome membrane. Its subcellular location is the autolysosome membrane. It carries out the reaction GTP + H2O = GDP + phosphate + H(+). Regulated by guanine nucleotide exchange factors (GEFs) including C9orf72-SMCR8 complex, which promote the exchange of bound GDP for free GTP. Regulated by GTPase activating proteins (GAPs) which increase the GTP hydrolysis activity. Inhibited by GDP dissociation inhibitors (GDIs). The small GTPases Rab are key regulators of intracellular membrane trafficking, from the formation of transport vesicles to their fusion with membranes. Rabs cycle between an inactive GDP-bound form and an active GTP-bound form that is able to recruit to membranes different sets of downstream effectors directly responsible for vesicle formation, movement, tethering and fusion. RAB39B is involved in autophagy and may function in autophagosome formation. Binds downstream effector PICK1 to ensure selectively GRIA2 exit from the endoplasmic reticulum to the Golgi and to regulate AMPAR composition at the post-synapses and thus synaptic transmission. May regulate the homeostasis of SNCA/alpha-synuclein. The sequence is that of Ras-related protein Rab-39B from Mus musculus (Mouse).